The chain runs to 155 residues: MGPGDFRRCRERISQGLQGLPGRAELWFPPRPACDFFGDGRSTDIQEEALAASPLLEDLRRRLTRAFQWAVQRAISRRVQEAAAAAAAREEQSWTGVEATLARLRAELVEMHFQNHQLARTLLDLNMKVQQLKKEYELEITSDSQSPKDDAANPE.

The protein is Alanine- and arginine-rich domain-containing protein (AARD) of Homo sapiens (Human).